Here is a 1032-residue protein sequence, read N- to C-terminus: GPI ethanolamine phosphate transferase 1 (1032 aa).

The Cytoplasmic segment spans residues M1 to R6. Residues F7 to I27 form a helical membrane-spanning segment. Over Y28–R468 the chain is Lumenal. N150 and N435 each carry an N-linked (GlcNAc...) asparagine glycan. The chain crosses the membrane as a helical span at residues T469–L489. Residues H490–R500 lie on the Cytoplasmic side of the membrane. A helical membrane pass occupies residues T501–Y521. Topologically, residues Q522–K523 are lumenal. The helical transmembrane segment at S524–A544 threads the bilayer. The Cytoplasmic segment spans residues R545–G564. The chain crosses the membrane as a helical span at residues G565 to M585. Residues R586 to E596 are Lumenal-facing. Residues I597–V617 form a helical membrane-spanning segment. At R618–V622 the chain is on the cytoplasmic side. Residues L623–I643 form a helical membrane-spanning segment. Residues K644–N647 lie on the Lumenal side of the membrane. Residues I648 to F668 form a helical membrane-spanning segment. Residues E669–S688 lie on the Cytoplasmic side of the membrane. Residues L689–T709 form a helical membrane-spanning segment. The Lumenal segment spans residues R710–L722. The chain crosses the membrane as a helical span at residues P723–F743. At H744–T766 the chain is on the cytoplasmic side. The chain crosses the membrane as a helical span at residues F767–V787. At T788–R841 the chain is on the lumenal side. 2 N-linked (GlcNAc...) asparagine glycosylation sites follow: N810 and N820. Residues V842 to S862 traverse the membrane as a helical segment. Over V863–S884 the chain is Cytoplasmic. The chain crosses the membrane as a helical span at residues A885–L905. Residues N906–S914 lie on the Lumenal side of the membrane. A helical transmembrane segment spans residues A915–V935. The Cytoplasmic segment spans residues R936–F951. The chain crosses the membrane as a helical span at residues L952–I972. The Lumenal segment spans residues S973–V1032. The segment at G994–V1032 is disordered.

The protein belongs to the PIGG/PIGN/PIGO family. PIGN subfamily.

The protein localises to the endoplasmic reticulum membrane. The protein operates within glycolipid biosynthesis; glycosylphosphatidylinositol-anchor biosynthesis. Its function is as follows. Ethanolamine phosphate transferase involved in glycosylphosphatidylinositol-anchor biosynthesis. Transfers ethanolamine phosphate to the first alpha-1,4-linked mannose of the glycosylphosphatidylinositol precursor of GPI-anchor. The chain is GPI ethanolamine phosphate transferase 1 (mcd4) from Aspergillus fumigatus (strain ATCC MYA-4609 / CBS 101355 / FGSC A1100 / Af293) (Neosartorya fumigata).